We begin with the raw amino-acid sequence, 480 residues long: Ribulose bisphosphate carboxylase large chain (480 aa).

A propeptide spanning residues 1–2 (MS) is cleaved from the precursor. An N-acetylproline modification is found at P3. An N6,N6,N6-trimethyllysine modification is found at K14. Residues N123 and T173 each contribute to the substrate site. The active-site Proton acceptor is the K175. A substrate-binding site is contributed by K177. Mg(2+) is bound by residues K201, D203, and E204. K201 carries the N6-carboxylysine modification. The active-site Proton acceptor is the H294. The substrate site is built by R295, H327, and S379.

Belongs to the RuBisCO large chain family. Type I subfamily. As to quaternary structure, heterohexadecamer of 8 large chains and 8 small chains; disulfide-linked. The disulfide link is formed within the large subunit homodimers. Mg(2+) is required as a cofactor. The disulfide bond which can form in the large chain dimeric partners within the hexadecamer appears to be associated with oxidative stress and protein turnover.

The protein localises to the plastid. Its subcellular location is the chloroplast. It carries out the reaction 2 (2R)-3-phosphoglycerate + 2 H(+) = D-ribulose 1,5-bisphosphate + CO2 + H2O. The catalysed reaction is D-ribulose 1,5-bisphosphate + O2 = 2-phosphoglycolate + (2R)-3-phosphoglycerate + 2 H(+). RuBisCO catalyzes two reactions: the carboxylation of D-ribulose 1,5-bisphosphate, the primary event in carbon dioxide fixation, as well as the oxidative fragmentation of the pentose substrate in the photorespiration process. Both reactions occur simultaneously and in competition at the same active site. This is Ribulose bisphosphate carboxylase large chain from Basella alba (Malabar spinach).